An 82-amino-acid polypeptide reads, in one-letter code: Myosin light chain alkali (82 aa).

The EF-hand domain maps to 7–42; it reads GCYEDFIECLKLYDKEENGTMLLAELQHALLALGEN.

Myosin is a hexamer of 2 heavy chains and 4 light chains.

The protein is Myosin light chain alkali (Mlc1) of Drosophila teissieri (Fruit fly).